Reading from the N-terminus, the 85-residue chain is Cell division topological specificity factor (85 aa).

It belongs to the MinE family.

Functionally, prevents the cell division inhibition by proteins MinC and MinD at internal division sites while permitting inhibition at polar sites. This ensures cell division at the proper site by restricting the formation of a division septum at the midpoint of the long axis of the cell. The sequence is that of Cell division topological specificity factor from Cellvibrio japonicus (strain Ueda107) (Pseudomonas fluorescens subsp. cellulosa).